A 315-amino-acid chain; its full sequence is Methionyl-tRNA formyltransferase (315 aa).

113-116 (SILP) provides a ligand contact to (6S)-5,6,7,8-tetrahydrofolate.

Belongs to the Fmt family.

The catalysed reaction is L-methionyl-tRNA(fMet) + (6R)-10-formyltetrahydrofolate = N-formyl-L-methionyl-tRNA(fMet) + (6S)-5,6,7,8-tetrahydrofolate + H(+). Its function is as follows. Attaches a formyl group to the free amino group of methionyl-tRNA(fMet). The formyl group appears to play a dual role in the initiator identity of N-formylmethionyl-tRNA by promoting its recognition by IF2 and preventing the misappropriation of this tRNA by the elongation apparatus. This Aliivibrio fischeri (strain ATCC 700601 / ES114) (Vibrio fischeri) protein is Methionyl-tRNA formyltransferase.